Here is a 62-residue protein sequence, read N- to C-terminus: MWRIWQLFDPRQALVGLATFLFVLALLIHFILLSTERFNWLEGASTKPVQTSMVMPSSDLAV.

Met-1 carries the N-formylmethionine modification. At 1 to 12 (MWRIWQLFDPRQ) the chain is on the cytoplasmic side. A helical membrane pass occupies residues 13–33 (ALVGLATFLFVLALLIHFILL). Residue His-29 coordinates a bacteriochlorophyll. At 34 to 52 (STERFNWLEGASTKPVQTS) the chain is on the periplasmic side. The propeptide occupies 53-62 (MVMPSSDLAV).

The protein belongs to the antenna complex alpha subunit family. In terms of assembly, the core complex is formed by different alpha and beta chains, binding bacteriochlorophyll molecules, and arranged most probably in tetrameric structures disposed around the reaction center. The non-pigmented gamma chains may constitute additional components.

It is found in the cell inner membrane. Its function is as follows. Antenna complexes are light-harvesting systems, which transfer the excitation energy to the reaction centers. This chain is Light-harvesting protein B-870 alpha chain, found in Rhodospirillum rubrum.